The sequence spans 184 residues: Isopentenyl-diphosphate Delta-isomerase (184 aa).

The Mn(2+) site is built by histidine 26 and histidine 33. Positions 31-165 (PLHLAFSCYL…PSAFSPWLGL (135 aa)) constitute a Nudix hydrolase domain. The active site involves cysteine 68. Histidine 70 is a Mn(2+) binding site. Glutamate 88 is a binding site for Mg(2+). Residues glutamate 115 and glutamate 117 each coordinate Mn(2+). The active site involves glutamate 117.

Belongs to the IPP isomerase type 1 family. The cofactor is Mg(2+). Mn(2+) is required as a cofactor.

Its subcellular location is the cytoplasm. The catalysed reaction is isopentenyl diphosphate = dimethylallyl diphosphate. The protein operates within isoprenoid biosynthesis; dimethylallyl diphosphate biosynthesis; dimethylallyl diphosphate from isopentenyl diphosphate: step 1/1. Catalyzes the 1,3-allylic rearrangement of the homoallylic substrate isopentenyl (IPP) to its highly electrophilic allylic isomer, dimethylallyl diphosphate (DMAPP). This chain is Isopentenyl-diphosphate Delta-isomerase, found in Paenarthrobacter aurescens (strain TC1).